Consider the following 129-residue polypeptide: uncharacterized protein (129 aa).

Residues 8-24 (YLILFITIIAICSLFRI) form a helical membrane-spanning segment.

It localises to the membrane. This is an uncharacterized protein from Rickettsia prowazekii (strain Madrid E).